An 80-amino-acid chain; its full sequence is DNA-binding protein HU-like (80 aa).

It belongs to the bacterial histone-like protein family.

In terms of biological role, histone-like DNA-binding protein which is capable of wrapping DNA to stabilize it, and thus to prevent its denaturation under extreme environmental conditions. In Rickettsia conorii (strain ATCC VR-613 / Malish 7), this protein is DNA-binding protein HU-like.